Reading from the N-terminus, the 310-residue chain is tRNA uridine(34) hydroxylase (310 aa).

Positions 127–225 (KDKDTIVIDT…YLEDISKEES (99 aa)) constitute a Rhodanese domain. Residue Cys-185 is the Cysteine persulfide intermediate of the active site.

The protein belongs to the TrhO family.

It catalyses the reaction uridine(34) in tRNA + AH2 + O2 = 5-hydroxyuridine(34) in tRNA + A + H2O. In terms of biological role, catalyzes oxygen-dependent 5-hydroxyuridine (ho5U) modification at position 34 in tRNAs. This chain is tRNA uridine(34) hydroxylase, found in Prochlorococcus marinus (strain MIT 9515).